We begin with the raw amino-acid sequence, 637 residues long: Tumor protein p73 (637 aa).

The transactivation stretch occupies residues 1-46 (MAQSTTTSPDGGTTFEHLWSSLEPDSTYFDLPQSSRGNNEVVGGTD). Thr-27 carries the post-translational modification Phosphothreonine. The residue at position 28 (Tyr-28) is a Phosphotyrosine; by SRC and HCK. The segment at 78–104 (RAASASPYTPEHAASVPTHSPYAQPSS) is disordered. A compositionally biased stretch (polar residues) spans 94-104 (PTHSPYAQPSS). Tyr-99 carries the post-translational modification Phosphotyrosine. The DNA-binding stretch occupies residues 131-310 (FQQSSTAKSA…DRKADEDHYR (180 aa)). Cys-194, His-197, Cys-258, and Cys-262 together coordinate Zn(2+). Positions 301–311 (DRKADEDHYRE) are enriched in basic and acidic residues. Residues 301–351 (DRKADEDHYREQQALNESSAKNGAASKRAFKQSPPAVPALGPGVKKRRHGD) are disordered. Residues 345–380 (KKRRHGDEDTYYLQVRGRENFEILMKLKESLELMEL) form an interaction with HIPK2 region. The interval 345 to 386 (KKRRHGDEDTYYLQVRGRENFEILMKLKESLELMELVPQPLV) is oligomerization. Residues 483–487 (PPPPY) carry the PPxY motif motif. One can recognise an SAM domain in the interval 485–551 (PPYHADPSLV…WRGLQDLKQG (67 aa)). Residue Lys-628 forms a Glycyl lysine isopeptide (Lys-Gly) (interchain with G-Cter in SUMO); in isoform Alpha linkage. Lys-628 is covalently cross-linked (Glycyl lysine isopeptide (Lys-Gly) (interchain with G-Cter in SUMO2)).

It belongs to the p53 family. As to quaternary structure, found in a complex with p53/TP53 and CABLES1. The C-terminal oligomerization domain binds to the ABL1 tyrosine kinase SH3 domain. Interacts with HECW2. Isoforms Alpha and Beta interact with HIPK2. Isoform Alpha interacts with RANBP9. Interacts with WWOX. Isoform Beta interacts homotypically and with p53, whereas isoform Alpha does not. Interacts (via SAM domain) with FBXO45 (via B30.2/SPRY domain). Interacts with YAP1 (phosphorylated form). Interacts with HCK (via SH3 domain); this inhibits TP73 activity and degradation. Zn(2+) is required as a cofactor. Post-translationally, isoform Alpha (but not isoform Beta) is sumoylated on Lys-628, which potentiates proteasomal degradation but does not affect transcriptional activity. In terms of processing, polyubiquitinated by RCHY1/PIRH2; leading to its degradation by the proteasome.

Its subcellular location is the nucleus. The protein localises to the cytoplasm. In terms of biological role, participates in the apoptotic response to DNA damage. May be a tumor suppressor protein. Is an activator of FOXJ1 expression, essential for the positive regulation of lung ciliated cell differentiation. The chain is Tumor protein p73 (TP73) from Chlorocebus aethiops (Green monkey).